A 2813-amino-acid polypeptide reads, in one-letter code: von Willebrand factor (2813 aa).

A signal peptide spans 1 to 22; it reads MSPTRLVRVLLALALILPGKLC. The propeptide occupies 23-763; sequence TKGTVGRSSM…SSPRSHRSKR (741 aa). The region spanning 33–201 is the VWFD 1 domain; that stretch reads ARCSLFGGDF…ALSSGEQRCK (169 aa). Disulfide bonds link cysteine 35–cysteine 162 and cysteine 57–cysteine 200. N-linked (GlcNAc...) asparagine glycans are attached at residues asparagine 99, asparagine 156, and asparagine 211. A TIL 1 domain is found at 295 to 348; sequence CPAGMEYKECVSPCTRTCQSLHVKEVCQEQCVDGCSCPEGQLLDEGHCVGSAEC. The VWFD 2 domain occupies 386–560; sequence GECLVTGQSH…NAWKLLGACE (175 aa). Intrachain disulfides connect cysteine 388/cysteine 524, cysteine 410/cysteine 559, and cysteine 432/cysteine 440. A Cell attachment site motif is present at residues 531 to 533; the sequence is RGD. TIL domains follow at residues 652–707 and 776–827; these read CPQG…KAQC and CPAD…LERC. A glycan (N-linked (GlcNAc...) asparagine) is linked at asparagine 666. The Cell attachment site signature appears at 698-700; the sequence is RGD. The segment at 764-787 is amino-terminal; sequence SLSCRPPMVKLVCPADNPRAEGLE. Disulfide bonds link cysteine 767/cysteine 808, cysteine 776/cysteine 804, and cysteine 810/cysteine 821. An E1 region spans residues 788 to 833; that stretch reads CAKTCQNYDLQCMSTGCVSGCLCPQGMVRHENRCVALERCPCFHQG. The tract at residues 826-853 is CX; the sequence is RCPCFHQGQEYAPGETVKIDCNTCVCRD. A glycan (N-linked (GlcNAc...) asparagine) is linked at asparagine 857. The VWFD 3 domain occupies 865–1032; the sequence is ATCSAIGMAH…NSWKVNPQCA (168 aa). 11 disulfide bridges follow: cysteine 867–cysteine 996, cysteine 889–cysteine 1031, cysteine 898–cysteine 993, cysteine 914–cysteine 921, cysteine 1060–cysteine 1084, cysteine 1071–cysteine 1111, cysteine 1089–cysteine 1091, cysteine 1126–cysteine 1130, cysteine 1149–cysteine 1169, cysteine 1153–cysteine 1165, and cysteine 1196–cysteine 1199. One can recognise a TIL 4 domain in the interval 1146–1196; it reads YNSCAPACPITCQHPEPLACPVQCVEGCHAHCPPGKILDELLQTCIDPEDC. N-linked (GlcNAc...) asparagine glycosylation is present at asparagine 1231. 2 cysteine pairs are disulfide-bonded: cysteine 1234–cysteine 1237 and cysteine 1272–cysteine 1458. 2 VWFA domains span residues 1277-1453 and 1498-1665; these read DLVF…RDEI and DVVF…PDLV. N-linked (GlcNAc...) asparagine glycosylation is found at asparagine 1515 and asparagine 1574. Cystine bridges form between cysteine 1669–cysteine 1670, cysteine 1686–cysteine 1872, cysteine 1879–cysteine 1904, cysteine 1899–cysteine 1940, cysteine 1927–cysteine 2088, cysteine 1950–cysteine 2085, cysteine 1972–cysteine 2123, and cysteine 1993–cysteine 2001. The VWFA 3 domain maps to 1691–1871; sequence DVVLLLDGSS…TLGNSFFHKL (181 aa). The VWFD 4 domain occupies 1948 to 2124; that stretch reads CVCMGSSTRH…TVQQLGKTCQ (177 aa). An E2 region spans residues 2216–2261; sequence CPRLCEGNTSSCGDQPSEGCFCPPNQVMLEGSCVPEEACTQCISED. Asparagine 2223, asparagine 2290, asparagine 2357, and asparagine 2400 each carry an N-linked (GlcNAc...) asparagine glycan. Positions 2255–2328 constitute a VWFC 1 domain; that stretch reads TQCISEDGVR…CCPEYECVCD (74 aa). The VWFC 2 domain maps to 2429 to 2495; it reads KVCVHRGTIY…HEGECCGRCL (67 aa). The Cell attachment site signature appears at 2507-2509; it reads RGD. Asparagine 2546 and asparagine 2585 each carry an N-linked (GlcNAc...) asparagine glycan. The VWFC 3 domain occupies 2580-2645; sequence EACLLNGTII…NQGECCGRCL (66 aa). 4 disulfide bridges follow: cysteine 2724–cysteine 2774, cysteine 2739–cysteine 2788, cysteine 2750–cysteine 2804, and cysteine 2754–cysteine 2806. The 89-residue stretch at 2724–2812 folds into the CTCK domain; sequence CKDIIAKLQR…QCRCSPRKCS (89 aa). An N-linked (GlcNAc...) asparagine glycan is attached at asparagine 2790.

In terms of assembly, multimeric. Interacts with F8. In terms of processing, all cysteine residues are involved in intrachain or interchain disulfide bonds. N- and O-glycosylated. In terms of tissue distribution, plasma.

The protein localises to the secreted. It localises to the extracellular space. The protein resides in the extracellular matrix. Important in the maintenance of hemostasis, it promotes adhesion of platelets to the sites of vascular injury by forming a molecular bridge between sub-endothelial collagen matrix and platelet-surface receptor complex, glycoprotein Ibalpha/IX/V. Also acts as a chaperone for coagulation factor VIII, delivering it to the site of injury, stabilizing its heterodimeric structure and protecting it from premature clearance from plasma. This Canis lupus familiaris (Dog) protein is von Willebrand factor (VWF).